The primary structure comprises 440 residues: Ribosomal protein uS12 methylthiotransferase RimO (440 aa).

An MTTase N-terminal domain is found at 5-116 (PTIAISHLGC…IVNVIERAEQ (112 aa)). [4Fe-4S] cluster is bound by residues cysteine 14, cysteine 50, cysteine 79, cysteine 154, cysteine 158, and cysteine 161. Positions 140–370 (TTTEGVAYLR…ALQQPISWRK (231 aa)) constitute a Radical SAM core domain. Positions 372–438 (QQEVGKTVEV…EYDLFGQVVS (67 aa)) constitute a TRAM domain.

Belongs to the methylthiotransferase family. RimO subfamily. It depends on [4Fe-4S] cluster as a cofactor.

Its subcellular location is the cytoplasm. The enzyme catalyses L-aspartate(89)-[ribosomal protein uS12]-hydrogen + (sulfur carrier)-SH + AH2 + 2 S-adenosyl-L-methionine = 3-methylsulfanyl-L-aspartate(89)-[ribosomal protein uS12]-hydrogen + (sulfur carrier)-H + 5'-deoxyadenosine + L-methionine + A + S-adenosyl-L-homocysteine + 2 H(+). Functionally, catalyzes the methylthiolation of an aspartic acid residue of ribosomal protein uS12. This Trichormus variabilis (strain ATCC 29413 / PCC 7937) (Anabaena variabilis) protein is Ribosomal protein uS12 methylthiotransferase RimO.